Reading from the N-terminus, the 321-residue chain is Glutaminase (321 aa).

Residues Ser-69, Asn-120, Glu-165, Asn-172, Tyr-196, Tyr-248, and Val-266 each coordinate substrate.

It belongs to the glutaminase family. Homotetramer.

The enzyme catalyses L-glutamine + H2O = L-glutamate + NH4(+). This chain is Glutaminase, found in Bacteroides fragilis (strain ATCC 25285 / DSM 2151 / CCUG 4856 / JCM 11019 / LMG 10263 / NCTC 9343 / Onslow / VPI 2553 / EN-2).